Consider the following 388-residue polypeptide: Palmitoyltransferase ZDHHC18-B (388 aa).

The disordered stretch occupies residues 1–33 (MKNREYQQIDPQALATPTPTPPPRSLPEHKPRR). Residues 1–58 (MKNREYQQIDPQALATPTPTPPPRSLPEHKPRRARRKWEVFPGKNRFYCDGRIIVARQ) lie on the Cytoplasmic side of the membrane. The chain crosses the membrane as a helical span at residues 59-79 (SGVLPLTLGLILLTSGLFFIF). The Lumenal portion of the chain corresponds to 80 to 87 (DCPFLVKH). A helical membrane pass occupies residues 88–108 (LTSCIPAIGGVLFVFVIISLL). Over 109–205 (QTSFTDPGIL…GNCVGKRNYR (97 aa)) the chain is Cytoplasmic. Positions 162-212 (KYCFTCKIFRPPRTSHCSLCDNCVERFDHHCPWVGNCVGKRNYRFFYTFIV) constitute a DHHC domain. The S-palmitoyl cysteine intermediate role is filled by C192. Residues 206-226 (FFYTFIVSLSFLTAFIFGCVT) traverse the membrane as a helical segment. Residues 227-253 (THLALRSQGGNGLVNALQSSPASALEL) are Lumenal-facing. A helical membrane pass occupies residues 254-274 (VVCFFSVWSILGLSGFHTYLV). Residues 275-388 (AANLTTNEDI…AISMQNHSTA (114 aa)) are Cytoplasmic-facing.

This sequence belongs to the DHHC palmitoyltransferase family. ERF2/ZDHHC9 subfamily.

It is found in the golgi apparatus membrane. It carries out the reaction L-cysteinyl-[protein] + hexadecanoyl-CoA = S-hexadecanoyl-L-cysteinyl-[protein] + CoA. Palmitoyltransferase that catalyzes the addition of palmitate onto various protein substrates, such as CGAS, HRAS and LCK. In Danio rerio (Zebrafish), this protein is Palmitoyltransferase ZDHHC18-B.